The following is a 298-amino-acid chain: Zinc-alpha-2-glycoprotein (298 aa).

An N-terminal signal peptide occupies residues 1–20; the sequence is MVRMVPVLLSLLLLLGPAVP. Q21 carries the pyrrolidone carboxylic acid modification. N-linked (GlcNAc...) (complex) asparagine glycosylation is present at N109. N112 carries an N-linked (GlcNAc...) asparagine glycan. 2 disulfides stabilise this stretch: C123–C186 and C225–C280. The N-linked (GlcNAc...) (complex) asparagine glycan is linked to N128. An Ig-like C1-type domain is found at 207–292; the sequence is PSVVVTSHQA…QHSSLAQPLV (86 aa). An N-linked (GlcNAc...) asparagine glycan is attached at N259.

Belongs to the MHC class I family. Interacts with PIP. N-glycosylated. N-glycan at Asn-128: Hex5HexNAc4. Blood plasma, seminal plasma, urine, saliva, sweat, epithelial cells of various human glands, liver.

The protein resides in the secreted. Its function is as follows. Stimulates lipid degradation in adipocytes and causes the extensive fat losses associated with some advanced cancers. May bind polyunsaturated fatty acids. The sequence is that of Zinc-alpha-2-glycoprotein (AZGP1) from Homo sapiens (Human).